We begin with the raw amino-acid sequence, 356 residues long: UDP-N-acetylglucosamine--N-acetylmuramyl-(pentapeptide) pyrophosphoryl-undecaprenol N-acetylglucosamine transferase (356 aa).

UDP-N-acetyl-alpha-D-glucosamine contacts are provided by residues 12 to 14 (TGG), N124, R163, S188, I242, 261 to 266 (ALTVSE), and Q287.

Belongs to the glycosyltransferase 28 family. MurG subfamily.

It is found in the cell inner membrane. It catalyses the reaction di-trans,octa-cis-undecaprenyl diphospho-N-acetyl-alpha-D-muramoyl-L-alanyl-D-glutamyl-meso-2,6-diaminopimeloyl-D-alanyl-D-alanine + UDP-N-acetyl-alpha-D-glucosamine = di-trans,octa-cis-undecaprenyl diphospho-[N-acetyl-alpha-D-glucosaminyl-(1-&gt;4)]-N-acetyl-alpha-D-muramoyl-L-alanyl-D-glutamyl-meso-2,6-diaminopimeloyl-D-alanyl-D-alanine + UDP + H(+). It participates in cell wall biogenesis; peptidoglycan biosynthesis. Its function is as follows. Cell wall formation. Catalyzes the transfer of a GlcNAc subunit on undecaprenyl-pyrophosphoryl-MurNAc-pentapeptide (lipid intermediate I) to form undecaprenyl-pyrophosphoryl-MurNAc-(pentapeptide)GlcNAc (lipid intermediate II). In Pseudomonas fluorescens (strain ATCC BAA-477 / NRRL B-23932 / Pf-5), this protein is UDP-N-acetylglucosamine--N-acetylmuramyl-(pentapeptide) pyrophosphoryl-undecaprenol N-acetylglucosamine transferase.